The primary structure comprises 654 residues: Neuroendocrine convertase 2 (654 aa).

A signal peptide spans 1–21 (MAAATWSWLLAPFLLLHWASA). A propeptide spanning residues 22–121 (GAGGGAGGSG…VQQPGFKRVK (100 aa)) is cleaved from the precursor. The Peptidase S8 domain maps to 158–483 (QWYLKNTGQN…FGVLDAGAMV (326 aa)). N-linked (GlcNAc...) asparagine glycosylation occurs at asparagine 189. Active-site charge relay system residues include aspartate 196 and histidine 237. Disulfide bonds link cysteine 254-cysteine 404 and cysteine 346-cysteine 376. An N-linked (GlcNAc...) asparagine glycan is attached at asparagine 312. Serine 412 functions as the Charge relay system in the catalytic mechanism. The P/Homo B domain occupies 491–627 (SVPPRYHCEA…SLVLHGTKEA (137 aa)). Residues cysteine 498 and cysteine 524 are joined by a disulfide bond. The N-linked (GlcNAc...) asparagine glycan is linked to asparagine 544.

This sequence belongs to the peptidase S8 family. Furin subfamily. As to expression, expressed in the central nervous system (CNS) and midgut endocrine cells of third instar larva (at protein level). In the CNS, expressed in the CA-LP1 and CA-LP2 neurons which innervate the corpus allatum, and in the CC-MS2 neurons which innervate the corpora cardiaca of the ring gland. Also expressed in the CC-MS1, SP3, Tv and Va neurons. Expressed in Akh-producing cells of the corpora cardiaca. In the embryo, restricted to the final stages of embryogenesis where expression is found in anterior sensory structures and in only 168 cells in the brain and ventral nerve cord. After larvae hatch, the sensory structures and most cells in the CNS turn off or substantially reduce expression. In third instar larva, expressed at higher levels in the anterior section than in the posterior section. Little expression is detected in the adult head. In the developing eye, expressed at higher levels in pale-type R7 photoreceptor cells than in yellow-type R7 cells although expression is not seen in all pale-type R7 cells. Also expressed in outer photoreceptor cells.

It localises to the secreted. The catalysed reaction is Release of protein hormones and neuropeptides from their precursors, generally by hydrolysis of -Lys-Arg-|- bonds.. Functionally, serine endopeptidase which is involved in the processing of hormone and other protein precursors at sites comprised of pairs of basic amino acid residues. Required during embryonic and larval development, probably by proteolytically processing peptide hormones involved in hatching, larval growth and larval molting. Required for the processing and activation of Akh which maintains normal hemolymph sugar levels. Has been shown in one study to be required for processing of sli into slit N-product and slit C-product in the embryo which is necessary for lateral transverse muscle elongation but has been shown in another study not to be required for sli cleavage. Required for larval hatching. Also required for normal larval wandering behavior which occurs prior to pupariation. Required during pupal development for head eversion, leg and wing disk extension, and abdominal differentiation. Required during eye development for R8 photoreceptor cell specification by regulating processing of ligands required for the BMP and activin signaling pathways. This is Neuroendocrine convertase 2 from Drosophila melanogaster (Fruit fly).